Consider the following 371-residue polypeptide: Transcription factor MYB12 (371 aa).

2 HTH myb-type domains span residues 9 to 61 (KVGI…INYL) and 62 to 116 (RSDL…SRKL). DNA-binding regions (H-T-H motif) lie at residues 37–61 (WRSL…INYL) and 89–112 (WSLI…NSHL). The disordered stretch occupies residues 136–183 (NASSAPPPPQAKRRLGRTSRSAMKPKIHRTKTRKTKKTSAPPEPNADV). Residues 146 to 172 (AKRRLGRTSRSAMKPKIHRTKTRKTKK) are compositionally biased toward basic residues.

Expressed in stems and flower buds. Expressed in seedlings, roots, cotyledons and apical meristems.

Its subcellular location is the nucleus. Its function is as follows. Flavonol-specific transcription activator involved in the regulation of several genes of flavonoid biosynthesis. Activates the expression of CHS, CHI, F3H and FLS1. Controls flavonol biosynthesis mainly in the root. Confers tolerance to UV-B. This is Transcription factor MYB12 from Arabidopsis thaliana (Mouse-ear cress).